A 131-amino-acid chain; its full sequence is L-ectoine synthase (131 aa).

The protein belongs to the ectoine synthase family.

The enzyme catalyses (2S)-4-acetamido-2-aminobutanoate = L-ectoine + H2O. It functions in the pathway amine and polyamine biosynthesis; ectoine biosynthesis; L-ectoine from L-aspartate 4-semialdehyde: step 3/3. Its function is as follows. Catalyzes the circularization of gamma-N-acetyl-alpha,gamma-diaminobutyric acid (ADABA) to ectoine (1,4,5,6-tetrahydro-2-methyl-4-pyrimidine carboxylic acid), which is an excellent osmoprotectant. The polypeptide is L-ectoine synthase (Wolinella succinogenes (strain ATCC 29543 / DSM 1740 / CCUG 13145 / JCM 31913 / LMG 7466 / NCTC 11488 / FDC 602W) (Vibrio succinogenes)).